The sequence spans 645 residues: Aspartate--tRNA ligase, mitochondrial (645 aa).

The transit peptide at 1-47 (MYFPSWLSQLYRGLSRPIRRTTQPIWGSLYRSLLQSSQRRIPEFSSF) directs the protein to the mitochondrion. Phosphothreonine is present on Thr-219. Residue Ser-242 is modified to Phosphoserine. An aspartate region spans residues 244–247 (QQFK). Residue Arg-266 coordinates L-aspartate. 266–268 (RDE) lines the ATP pocket. At Lys-382 the chain carries N6-acetyllysine. Glu-535 lines the ATP pocket. An L-aspartate-binding site is contributed by Arg-542. Position 584–587 (584–587 (GLDR)) interacts with ATP.

It belongs to the class-II aminoacyl-tRNA synthetase family. Type 1 subfamily. In terms of assembly, homodimer.

The protein resides in the mitochondrion matrix. It localises to the mitochondrion membrane. It carries out the reaction tRNA(Asp) + L-aspartate + ATP = L-aspartyl-tRNA(Asp) + AMP + diphosphate. Functionally, catalyzes the attachment of aspartate to tRNA(Asp) in a two-step reaction: aspartate is first activated by ATP to form Asp-AMP and then transferred to the acceptor end of tRNA(Asp). The polypeptide is Aspartate--tRNA ligase, mitochondrial (DARS2) (Homo sapiens (Human)).